A 761-amino-acid polypeptide reads, in one-letter code: NADP-dependent malic enzyme (761 aa).

Residues 1 to 437 form a malic enzyme region; that stretch reads MPGIDKTDRA…QLSARRDPIA (437 aa). Tyr49 serves as the catalytic Proton donor. Residue Lys104 is the Proton acceptor of the active site. Residues Glu146, Asp147, and Asp172 each coordinate a divalent metal cation. NADP(+) contacts are provided by residues 205–208, Asn297, and Asn329; that span reads AGAA. Residues 438–761 are phosphate acetyltransferase; sequence STLQRIVERV…AAIAAYNAGT (324 aa).

It in the N-terminal section; belongs to the malic enzymes family. The protein in the C-terminal section; belongs to the phosphate acetyltransferase and butyryltransferase family. Homooctamer. Mg(2+) serves as cofactor. The cofactor is Mn(2+).

The catalysed reaction is (S)-malate + NADP(+) = pyruvate + CO2 + NADPH. It carries out the reaction oxaloacetate + H(+) = pyruvate + CO2. In Rhizobium meliloti (strain 1021) (Ensifer meliloti), this protein is NADP-dependent malic enzyme (tme).